Consider the following 257-residue polypeptide: MSFFLTTPAAIDLGVNIDHVATLRNARGTAYPDPVRAALAAEDAGADAITLHLREDRRHIVDADVRTLRPRVKTRMNLECAVTPEMLDIACEIRPHDACLVPEKRSELTTEGGLDVVGHFDAVRAACKQLADAGVRVSLFIDPDEAQIRAAHETGAPVIELHTGRYADAHDAAEQQREFERIATGVDAGIALGLKVNAGHGLHYTNVQAIAALPGIAELNIGHAIVAHAVFVGWDNAVREMKAIMVAARVAALHGGR.

Position 16 (asparagine 16) interacts with 3-amino-2-oxopropyl phosphate. Residue 18–19 (DH) coordinates 1-deoxy-D-xylulose 5-phosphate. Residue arginine 27 coordinates 3-amino-2-oxopropyl phosphate. The active-site Proton acceptor is the histidine 52. 1-deoxy-D-xylulose 5-phosphate-binding residues include arginine 54 and histidine 59. Catalysis depends on glutamate 79, which acts as the Proton acceptor. Threonine 109 serves as a coordination point for 1-deoxy-D-xylulose 5-phosphate. Histidine 200 (proton donor) is an active-site residue. Residues glycine 201 and 222–223 (GH) each bind 3-amino-2-oxopropyl phosphate.

The protein belongs to the PNP synthase family. Homooctamer; tetramer of dimers.

Its subcellular location is the cytoplasm. The enzyme catalyses 3-amino-2-oxopropyl phosphate + 1-deoxy-D-xylulose 5-phosphate = pyridoxine 5'-phosphate + phosphate + 2 H2O + H(+). It functions in the pathway cofactor biosynthesis; pyridoxine 5'-phosphate biosynthesis; pyridoxine 5'-phosphate from D-erythrose 4-phosphate: step 5/5. Its function is as follows. Catalyzes the complicated ring closure reaction between the two acyclic compounds 1-deoxy-D-xylulose-5-phosphate (DXP) and 3-amino-2-oxopropyl phosphate (1-amino-acetone-3-phosphate or AAP) to form pyridoxine 5'-phosphate (PNP) and inorganic phosphate. The protein is Pyridoxine 5'-phosphate synthase of Burkholderia pseudomallei (strain 1710b).